Consider the following 263-residue polypeptide: 4-hydroxy-tetrahydrodipicolinate reductase (263 aa).

10-15 contributes to the NAD(+) binding site; the sequence is GASGKM. Residue Arg-38 participates in NADP(+) binding. Residues 97-99 and 123-126 each bind NAD(+); these read GTT and APNF. His-153 (proton donor/acceptor) is an active-site residue. His-154 contacts (S)-2,3,4,5-tetrahydrodipicolinate. Catalysis depends on Lys-157, which acts as the Proton donor. 163–164 lines the (S)-2,3,4,5-tetrahydrodipicolinate pocket; that stretch reads GT.

The protein belongs to the DapB family.

It is found in the cytoplasm. The catalysed reaction is (S)-2,3,4,5-tetrahydrodipicolinate + NAD(+) + H2O = (2S,4S)-4-hydroxy-2,3,4,5-tetrahydrodipicolinate + NADH + H(+). The enzyme catalyses (S)-2,3,4,5-tetrahydrodipicolinate + NADP(+) + H2O = (2S,4S)-4-hydroxy-2,3,4,5-tetrahydrodipicolinate + NADPH + H(+). It participates in amino-acid biosynthesis; L-lysine biosynthesis via DAP pathway; (S)-tetrahydrodipicolinate from L-aspartate: step 4/4. Its function is as follows. Catalyzes the conversion of 4-hydroxy-tetrahydrodipicolinate (HTPA) to tetrahydrodipicolinate. This is 4-hydroxy-tetrahydrodipicolinate reductase from Dehalococcoides mccartyi (strain ATCC BAA-2266 / KCTC 15142 / 195) (Dehalococcoides ethenogenes (strain 195)).